We begin with the raw amino-acid sequence, 135 residues long: Actin-related protein 2/3 complex subunit 5B (135 aa).

The protein belongs to the ARPC5 family. Component of the Arp2/3 complex composed of ARP2, ARP3, ARPC1/p41-ARC, ARPC2/p34-ARC, ARPC3/p21-ARC, ARPC4/p20-ARC and ARPC5/p16-ARC.

The protein localises to the cytoplasm. It is found in the cytoskeleton. Its subcellular location is the cell projection. Functions as a component of the Arp2/3 complex which is involved in regulation of actin polymerization and together with an activating nucleation-promoting factor (NPF) mediates the formation of branched actin networks. Arp2/3 complex plays a critical role in the control of cell morphogenesis via the modulation of cell polarity development. In Arabidopsis thaliana (Mouse-ear cress), this protein is Actin-related protein 2/3 complex subunit 5B (ARPC5B).